The primary structure comprises 369 residues: Chaperone protein DnaJ (369 aa).

The 65-residue stretch at 5–69 folds into the J domain; that stretch reads DYYDVLGISK…NKKAQYDRFG (65 aa). The segment at 131–213 adopts a CR-type zinc-finger fold; it reads GTTKNVSVDI…CSGAGRVKAK (83 aa). Positions 144, 147, 161, 164, 187, 190, 201, and 204 each coordinate Zn(2+). 4 CXXCXGXG motif repeats span residues 144–151, 161–168, 187–194, and 201–208; these read CGHCHGSG, CSKCHGQG, CPQCQGEG, and CHVCSGAG.

It belongs to the DnaJ family. Homodimer. Zn(2+) serves as cofactor.

Its subcellular location is the cytoplasm. Functionally, participates actively in the response to hyperosmotic and heat shock by preventing the aggregation of stress-denatured proteins and by disaggregating proteins, also in an autonomous, DnaK-independent fashion. Unfolded proteins bind initially to DnaJ; upon interaction with the DnaJ-bound protein, DnaK hydrolyzes its bound ATP, resulting in the formation of a stable complex. GrpE releases ADP from DnaK; ATP binding to DnaK triggers the release of the substrate protein, thus completing the reaction cycle. Several rounds of ATP-dependent interactions between DnaJ, DnaK and GrpE are required for fully efficient folding. Also involved, together with DnaK and GrpE, in the DNA replication of plasmids through activation of initiation proteins. The protein is Chaperone protein DnaJ of Acholeplasma laidlawii.